Reading from the N-terminus, the 405-residue chain is MTTGEVPDLLAFDDAFAQDRHNRYARMREEPVQRIRTVNGLDAWLITRYEDVKQALLDPRIAKDFGRTQQIIEKRLADAERRPGFSPDLGPHMLNTDPPDHTRLRKLVVKAFTARRVEGLRPRIEQITDDLLDRLAGRSEVDLIDEFAFPLPITVISELMGVEDSRRDDFRSWTNVLVDGSQPEAQAQASVAMVEYLTELIAKKRTEPGDDLLTALLEAVEDGDRLSEGELIAMVFLLLVAGHETTVNLIGNCVLSLLGNPDQLAALRNDPSLLPGAIEETLRYESPVANGTFRHTAEAVRFGDVVIPEGELVWVALGAANRDGERFEDPDRFDITRETTGHVAFGHGIHFCVGAALARLEAQIAVGRLLERFPDLRMAASPDDLRWRFSVLMRGLEKLPVRPGA.

Cysteine 352 provides a ligand contact to heme.

Belongs to the cytochrome P450 family. The cofactor is heme.

Its subcellular location is the cytoplasm. Its function is as follows. Not known, probably involved in the catabolism of octane and guaiacol. It displays a weak activity in the O-dealkylation of 7-ethoxycoumarin. The polypeptide is Cytochrome P450 107B1 (cyp107B1) (Saccharopolyspora erythraea (strain ATCC 11635 / DSM 40517 / JCM 4748 / NBRC 13426 / NCIMB 8594 / NRRL 2338)).